The chain runs to 349 residues: UDP-N-acetylenolpyruvoylglucosamine reductase (349 aa).

In terms of domain architecture, FAD-binding PCMH-type spans 25–197 (GIAARARFAA…VAVTFRLPKQ (173 aa)). R173 is an active-site residue. S249 functions as the Proton donor in the catalytic mechanism. The active site involves E345.

This sequence belongs to the MurB family. Requires FAD as cofactor.

It localises to the cytoplasm. The enzyme catalyses UDP-N-acetyl-alpha-D-muramate + NADP(+) = UDP-N-acetyl-3-O-(1-carboxyvinyl)-alpha-D-glucosamine + NADPH + H(+). It functions in the pathway cell wall biogenesis; peptidoglycan biosynthesis. Functionally, cell wall formation. This chain is UDP-N-acetylenolpyruvoylglucosamine reductase, found in Burkholderia cenocepacia (strain HI2424).